Here is a 1623-residue protein sequence, read N- to C-terminus: ATP-binding cassette sub-family A member 9 (1623 aa).

A helical transmembrane segment spans residues 31-51 (LLEWLFSLLLILFVYQLSSNL). A glycan (N-linked (GlcNAc...) asparagine) is linked at asparagine 120. 6 helical membrane passes run 225 to 245 (FFIFFCVISFSSLIYYLSVNI), 265 to 285 (AFWLSWSLMYAGFILVVAVLM), 295 to 315 (VVLTGFMVVFLLFLFYGLSLI), 329 to 349 (FLTGLAIFILTVFWGSLGFTA), 354 to 374 (LPAFVEWTLCFLSPFAFTTGM), and 398 to 418 (LIMATLFMLVLDALLYLVLAL). The region spanning 481–716 (IRIKNLKKEY…WGIGYHLSLH (236 aa)) is the ABC transporter 1 domain. An ATP-binding site is contributed by 517 to 524 (GHSGAGKT). Transmembrane regions (helical) follow at residues 863–883 (LMTVLLLFGISFVPQLLEHLV), 1025–1045 (AFFWIPVAASLTPYIAMGSIS), 1071–1091 (LVDIPIYFLILFLMQIMDSVF), 1107–1127 (IPCSIGYASSLIFMTYVISFI), 1135–1155 (SGIWSFFFLIVTIFFIIATDI), 1163–1183 (LLICTFLVPPFTLIGSLLIFS), and 1199–1219 (QLVFLALLIPYLHFLLFFFIL). Residues 1287–1520 (LRKEYIGRTK…FGKDYLLEMK (234 aa)) enclose the ABC transporter 2 domain. 1325–1332 (GHNGAGKS) lines the ATP pocket.

The protein belongs to the ABC transporter superfamily. ABCA family. As to expression, highly expressed in heart and to lower extent in kidney, brain and spleen. Weakly expressed in developing and adult brains. Weakly expressed in the cerebellar granular layer at P14 and P21.

The protein localises to the membrane. In terms of biological role, transporter that may play a role in monocyte differentiation and lipid transport and homeostasis. In Mus musculus (Mouse), this protein is ATP-binding cassette sub-family A member 9 (Abca9).